A 396-amino-acid polypeptide reads, in one-letter code: Ribosomal RNA large subunit methyltransferase I (396 aa).

A PUA domain is found at 2–81 (TVRLILAKGR…ESIDIDFFVR (80 aa)).

It belongs to the methyltransferase superfamily. RlmI family.

It localises to the cytoplasm. The enzyme catalyses cytidine(1962) in 23S rRNA + S-adenosyl-L-methionine = 5-methylcytidine(1962) in 23S rRNA + S-adenosyl-L-homocysteine + H(+). Functionally, specifically methylates the cytosine at position 1962 (m5C1962) of 23S rRNA. This Erwinia tasmaniensis (strain DSM 17950 / CFBP 7177 / CIP 109463 / NCPPB 4357 / Et1/99) protein is Ribosomal RNA large subunit methyltransferase I.